The chain runs to 573 residues: Proline--tRNA ligase (573 aa).

This sequence belongs to the class-II aminoacyl-tRNA synthetase family. ProS type 1 subfamily. As to quaternary structure, homodimer.

The protein resides in the cytoplasm. The enzyme catalyses tRNA(Pro) + L-proline + ATP = L-prolyl-tRNA(Pro) + AMP + diphosphate. In terms of biological role, catalyzes the attachment of proline to tRNA(Pro) in a two-step reaction: proline is first activated by ATP to form Pro-AMP and then transferred to the acceptor end of tRNA(Pro). As ProRS can inadvertently accommodate and process non-cognate amino acids such as alanine and cysteine, to avoid such errors it has two additional distinct editing activities against alanine. One activity is designated as 'pretransfer' editing and involves the tRNA(Pro)-independent hydrolysis of activated Ala-AMP. The other activity is designated 'posttransfer' editing and involves deacylation of mischarged Ala-tRNA(Pro). The misacylated Cys-tRNA(Pro) is not edited by ProRS. This is Proline--tRNA ligase from Chromohalobacter salexigens (strain ATCC BAA-138 / DSM 3043 / CIP 106854 / NCIMB 13768 / 1H11).